Consider the following 310-residue polypeptide: Beta-ketoacyl-[acyl-carrier-protein] synthase III 1 (310 aa).

Catalysis depends on residues C112 and H235. Positions 236–240 are ACP-binding; that stretch reads QANIR. The active site involves N265.

This sequence belongs to the thiolase-like superfamily. FabH family. As to quaternary structure, homodimer.

It localises to the cytoplasm. The enzyme catalyses malonyl-[ACP] + acetyl-CoA + H(+) = 3-oxobutanoyl-[ACP] + CO2 + CoA. The protein operates within lipid metabolism; fatty acid biosynthesis. In terms of biological role, catalyzes the condensation reaction of fatty acid synthesis by the addition to an acyl acceptor of two carbons from malonyl-ACP. Catalyzes the first condensation reaction which initiates fatty acid synthesis and may therefore play a role in governing the total rate of fatty acid production. Possesses both acetoacetyl-ACP synthase and acetyl transacylase activities. Its substrate specificity determines the biosynthesis of branched-chain and/or straight-chain of fatty acids. The protein is Beta-ketoacyl-[acyl-carrier-protein] synthase III 1 of Bacillus cereus (strain ATCC 14579 / DSM 31 / CCUG 7414 / JCM 2152 / NBRC 15305 / NCIMB 9373 / NCTC 2599 / NRRL B-3711).